Reading from the N-terminus, the 295-residue chain is Protease HtpX (295 aa).

A run of 2 helical transmembrane segments spans residues 4 to 24 (ILLF…TLSL) and 41 to 61 (SSLL…SLFI). H147 is a binding site for Zn(2+). The active site involves E148. H151 provides a ligand contact to Zn(2+). Transmembrane regions (helical) follow at residues 158–178 (VTLA…ARII) and 199–219 (VATI…VMWF). Position 224 (E224) interacts with Zn(2+).

The protein belongs to the peptidase M48B family. It depends on Zn(2+) as a cofactor.

Its subcellular location is the cell inner membrane. This is Protease HtpX from Pseudomonas putida (strain W619).